The chain runs to 604 residues: Inositol-3-phosphate synthase 1 (604 aa).

Positions 88, 89, 90, 91, 163, 198, 199, 210, 213, 251, 252, 253, 254, 303, 327, 328, 330, 361, 362, 363, 376, 456, 457, 485, and 486 each coordinate NAD(+).

Belongs to the myo-inositol 1-phosphate synthase family. NAD(+) is required as a cofactor.

It carries out the reaction D-glucose 6-phosphate = 1D-myo-inositol 3-phosphate. Its pathway is polyol metabolism; myo-inositol biosynthesis; myo-inositol from D-glucose 6-phosphate: step 1/2. Its function is as follows. Key enzyme in myo-inositol biosynthesis pathway that catalyzes the conversion of glucose 6-phosphate to 1-myo-inositol 1-phosphate in a NAD-dependent manner. Rate-limiting enzyme in the synthesis of all inositol-containing compounds. De novo-synthesized myo-inositol is essential for incorporation into GPI (glycosylphosphatidylinositol) glycolipids during intra-erythrocytic development. This Plasmodium falciparum (isolate 3D7) protein is Inositol-3-phosphate synthase 1.